The following is an 80-amino-acid chain: MKVWSQRLSFLIVMIFILAGLHSSSAGRKLPSMTTTEEFQRLSFDGKRILSEVTADKKYDRIYGASARLVPKGPNPLHNK.

The signal sequence occupies residues 1–26 (MKVWSQRLSFLIVMIFILAGLHSSSA). A hydroxyproline mark is found at P71 and P74. P74 carries O-linked (Ara...) hydroxyproline glycosylation.

Belongs to the CLV3/ESR signal peptide family. Interacts with the extracellular leucine-rich repeat region of CLV2 and PEPR2. The O-glycosylation (arabinosylation) of the hydroxyproline Pro-74 enhances binding affinity of the CLE14p peptide for its receptor. Mostly expressed in roots, and, to a lower extent, in seedlings and leaves. Expressed in the primary root tip under Pi deficiency.

The protein localises to the secreted. Its subcellular location is the extracellular space. In terms of biological role, extracellular signal peptide that regulates cell fate. Represses root apical meristem maintenance. Acts as an elicitor of the root meristem differentiation through the CLV2/CRN complex signaling pathway. Inhibits irreversibly root growth by reducing cell division rates in the root apical meristem. Regulates the transition of protophloem cells from proliferation to differentiation, thus impinging on postembryonic growth capacity of the root meristem; this signaling pathway requires CRN and CLV2. The protein is CLAVATA3/ESR (CLE)-related protein 14 of Arabidopsis thaliana (Mouse-ear cress).